We begin with the raw amino-acid sequence, 652 residues long: Bifunctional protein ThiO/ThiG (652 aa).

The segment at 1 to 366 (MTRDIVIIGG…HYSRSQKQAS (366 aa)) is thiO. Residues 5-19 (IVII…AIAV) and 44-46 (AGM) contribute to the FAD site. Residue Glu52 coordinates glycine. An FAD-binding site is contributed by Val173. Positions 301 and 327 each coordinate glycine. 325–331 (HYRNGIL) provides a ligand contact to FAD. The thiG stretch occupies residues 393–652 (PLIIAGKSFH…ASSPVTGTIS (260 aa)). Catalysis depends on Lys494, which acts as the Schiff-base intermediate with DXP. 1-deoxy-D-xylulose 5-phosphate-binding positions include Gly555, 581–582 (AG), and 603–604 (NS).

It in the N-terminal section; belongs to the DAO family. ThiO subfamily. The protein in the C-terminal section; belongs to the ThiG family. As to quaternary structure, interacts with ThiH and ThiS. FAD serves as cofactor.

It is found in the cytoplasm. It catalyses the reaction glycine + O2 + H2O = glyoxylate + H2O2 + NH4(+). It carries out the reaction [ThiS sulfur-carrier protein]-C-terminal-Gly-aminoethanethioate + 2-iminoacetate + 1-deoxy-D-xylulose 5-phosphate = [ThiS sulfur-carrier protein]-C-terminal Gly-Gly + 2-[(2R,5Z)-2-carboxy-4-methylthiazol-5(2H)-ylidene]ethyl phosphate + 2 H2O + H(+). It participates in cofactor biosynthesis; thiamine diphosphate biosynthesis. Catalyzes the FAD-dependent oxidative deamination of glycine. Is essential for thiamine biosynthesis since the oxidation of glycine catalyzed by ThiO generates the glycine imine intermediate (dehydroglycine) required for the biosynthesis of the thiazole ring of thiamine pyrophosphate. Its function is as follows. Catalyzes the rearrangement of 1-deoxy-D-xylulose 5-phosphate (DXP) to produce the thiazole phosphate moiety of thiamine. Sulfur is provided by the thiocarboxylate moiety of the carrier protein ThiS. In vitro, sulfur can be provided by H(2)S. The sequence is that of Bifunctional protein ThiO/ThiG (thiO/thiG) from Nostoc sp. (strain PCC 7120 / SAG 25.82 / UTEX 2576).